Here is a 114-residue protein sequence, read N- to C-terminus: Protein ORF3 (114 aa).

Hydrophobic stretches follow at residues 6–22 (CALG…CLCC) and 33–53 (AVVG…GLIL). An interaction with host HPX region spans residues 28 to 68 (VSRLAAVVGGAAAVPAVVSGVTGLILSPSQSPIFIQPTPLP). A homodimerization, and interaction with host AMBP/bikunin region spans residues 72–114 (PLRPGLDLAFANQPGHLAPLGEIRPSAPPLPPVADLPQPGLRR). The tract at residues 91–114 (LGEIRPSAPPLPPVADLPQPGLRR) is disordered. The segment at 95–104 (RPSAPPLPPV) is interaction with host SRC, HCK, FYN, PIK3R3 and GRB2. The PTAP/PSAP motif motif lies at 96–99 (PSAP).

The protein belongs to the hepevirus ORF3 protein family. In terms of assembly, forms homooligomers. Interacts with host SRC, HCK, FYN, PIK3R3 and GRB2 (via SH3 domain); binding does not activate the kinases. Interacts with host AMBP/bikunin and AMBP/alpha-1-microglobulin peptides. Interacts with host HPX/hemopexin. Interacts (when phosphorylated) with capsid protein ORF2. Interacts with host TSG101; this interaction plays a role in viral release from the host cell. Interacts with host SIRPA; this interaction down-regulates the phosphorylation of host IRF3. In terms of processing, palmitoylated in the N-terminus.

The protein localises to the host endoplasmic reticulum membrane. The protein resides in the host cytoplasm. It localises to the host cytoskeleton. It is found in the virion. Its subcellular location is the host cell membrane. Functionally, small multifunctional phosphoprotein involved in virion morphogenesis, egress and counteracting host innate immunity. Plays critical roles in the final steps of viral release by interacting with host TSG101, a member of the vacuolar protein-sorting pathway and using other cellular host proteins involved in vesicle formation pathway. Also acts as a viroporin and forms ion conductive pores allowing viral particle release. Impairs the generation of type I interferon by down-regulating host TLR3 and TLR7 as well as their downstream signaling pathways. Down-regulates the phosphorylation of host IRF3 via the interaction with host SIRP-alpha, thereby inhibiting IFN-I expression. Interacts with host microtubules. The polypeptide is Protein ORF3 (Hepatitis E virus genotype 2 (isolate Human/Mexico) (HEV-2)).